An 847-amino-acid polypeptide reads, in one-letter code: Phenylalanine--tRNA ligase beta subunit (847 aa).

Residues 40 to 168 enclose the tRNA-binding domain; it reads FGIEGPVVVG…LDPEVGADAV (129 aa). Residues 426-501 form the B5 domain; that stretch reads ADAEPIRLPD…RIVGFDRIPS (76 aa). Mg(2+) is bound by residues aspartate 479, aspartate 485, glutamate 488, and glutamate 489. The FDX-ACB domain occupies 753 to 846; the sequence is AGFPAATQDL…AGQLFGAAIR (94 aa).

The protein belongs to the phenylalanyl-tRNA synthetase beta subunit family. Type 1 subfamily. In terms of assembly, tetramer of two alpha and two beta subunits. Mg(2+) serves as cofactor.

It is found in the cytoplasm. It catalyses the reaction tRNA(Phe) + L-phenylalanine + ATP = L-phenylalanyl-tRNA(Phe) + AMP + diphosphate + H(+). The chain is Phenylalanine--tRNA ligase beta subunit from Leifsonia xyli subsp. xyli (strain CTCB07).